A 265-amino-acid polypeptide reads, in one-letter code: Polyglutamine-binding protein 1 (265 aa).

The region spanning 46 to 80 (EGLPPSWYKVFDPSCGLPYYWNADTDLVSWLSPHD) is the WW domain. Ser-94 is modified (phosphoserine). The tract at residues 94–265 (SSNADAEEKL…AEASRTKQQD (172 aa)) is disordered. The segment covering 99–175 (AEEKLDRSHD…DKADREEGKE (77 aa)) has biased composition (basic and acidic residues). 15 consecutive repeat copies span residues 104-110 (DRSHDKS), 111-117 (DRGHDKS), 118-124 (DRSHEKL), 125-131 (DRGHDKS), 132-138 (DRGHDKS), 139-140 (DR), 141-142 (DR), 143-144 (ER), 150-151 (DR), 152-153 (ER), 154-155 (ER), 156-157 (DR), 158-159 (ER), 160-161 (DR), and 162-163 (DR). The interval 104–138 (DRSHDKSDRGHDKSDRSHEKLDRGHDKSDRGHDKS) is 5 X 7 AA approximate tandem repeats of D-R-[SG]-H-D-K-S. The tract at residues 139–144 (DRDRER) is 3 X 2 AA tandem repeats of [DE]-R. Positions 150 to 163 (DRERERDRERDRDR) are 7 X 2 AA tandem repeats of [DE]-R. Residues 245–255 (YPSPGAVLRAN) form an important for interaction with TXNL4A region. Ser-247 is modified (phosphoserine).

As to quaternary structure, interacts with POU3F2/Brn-2, ATXN1, TXNL4A, HTT and AR. Interaction with ATXN1 correlates positively with the length of the polyglutamine tract. Interacts with RNA polymerase II large subunit in a phosphorylation-dependent manner. Forms a ternary complex with ATXN1 mutant and phosphorylated RNA polymerase II. Interacts (via C-terminus) with TXNL4A and CD2BP2. Interacts (via WW domain) with ATN1 and SF3B1, and may interact with additional splice factors. Interacts (via WW domain) with WBP11; Leading to reduce interaction between PQBP1 and TXNL4A. Interacts with CAPRIN1. Interacts with DDX1. Interacts with SFPQ. Interacts with KHSRP.

It is found in the nucleus. The protein localises to the nucleus speckle. The protein resides in the cytoplasmic granule. Functionally, intrinsically disordered protein that acts as a scaffold, and which is involved in different processes, such as pre-mRNA splicing, transcription regulation, innate immunity and neuron development. Interacts with splicing-related factors via the intrinsically disordered region and regulates alternative splicing of target pre-mRNA species. May suppress the ability of POU3F2 to transactivate the DRD1 gene in a POU3F2 dependent manner. Can activate transcription directly or via association with the transcription machinery. May be involved in ATXN1 mutant-induced cell death. The interaction with ATXN1 mutant reduces levels of phosphorylated RNA polymerase II large subunit. Involved in the assembly of cytoplasmic stress granule, possibly by participating in the transport of neuronal RNA granules. Also acts as an innate immune sensor of infection by retroviruses, by detecting the presence of reverse-transcribed DNA in the cytosol. Directly binds retroviral reverse-transcribed DNA in the cytosol and interacts with CGAS, leading to activate the cGAS-STING signaling pathway, triggering type-I interferon production. This chain is Polyglutamine-binding protein 1 (PQBP1), found in Gorilla gorilla gorilla (Western lowland gorilla).